The sequence spans 193 residues: Bcl-2-binding component 3, isoforms 1/2 (193 aa).

2 disordered regions span residues 1 to 28 (MARARQEGSSPEPVEGLARDGPRPFPLG) and 71 to 138 (ALGG…REIG). At S10 the chain carries Phosphoserine. The span at 71-82 (ALGGSRWPGGPR) shows a compositional bias: low complexity. Residues 137–151 (IGAQLRRMADDLNAQ) carry the BH3 motif.

This sequence belongs to the Bcl-2 family. In terms of assembly, interacts with MCL1 and BCL2A1. Interacts (via BH3 domain) with BCL2. Interacts with BCL2L1/BCL-XL. Interacts (via BH3 domain) with NOL3/ARC (via CARD domain); this interaction prevents BBC3 association with BCL2 and results in CASP8 activation. In terms of tissue distribution, ubiquitously expressed.

The protein resides in the mitochondrion. In terms of biological role, essential mediator of p53/TP53-dependent and p53/TP53-independent apoptosis. Promotes partial unfolding of BCL2L1 and dissociation of BCL2L1 from p53/TP53, releasing the bound p53/TP53 to induce apoptosis. Regulates ER stress-induced neuronal apoptosis. The chain is Bcl-2-binding component 3, isoforms 1/2 (BBC3) from Homo sapiens (Human).